Consider the following 436-residue polypeptide: GTPase Der (436 aa).

2 EngA-type G domains span residues 4-167 (PTVA…PTEV) and 175-351 (IRFS…ESQN). Residues 10-17 (GRPNVGKS), 57-61 (DTGGI), 119-122 (NKVD), 181-188 (GRPNVGKS), 229-233 (DTAGM), and 294-297 (NKWD) each bind GTP. Residues 352 to 436 (RRISSAVLND…PIHLIARKRK (85 aa)) form the KH-like domain.

This sequence belongs to the TRAFAC class TrmE-Era-EngA-EngB-Septin-like GTPase superfamily. EngA (Der) GTPase family. Associates with the 50S ribosomal subunit.

Its function is as follows. GTPase that plays an essential role in the late steps of ribosome biogenesis. The protein is GTPase Der of Streptococcus thermophilus (strain ATCC BAA-491 / LMD-9).